Reading from the N-terminus, the 148-residue chain is Large-conductance mechanosensitive channel (148 aa).

Transmembrane regions (helical) follow at residues 15-35 and 84-104; these read LDMA…KSLV and VGVF…VFLL.

This sequence belongs to the MscL family. Homopentamer.

It is found in the cell inner membrane. Its function is as follows. Channel that opens in response to stretch forces in the membrane lipid bilayer. May participate in the regulation of osmotic pressure changes within the cell. This Nitratidesulfovibrio vulgaris (strain DSM 19637 / Miyazaki F) (Desulfovibrio vulgaris) protein is Large-conductance mechanosensitive channel.